A 208-amino-acid polypeptide reads, in one-letter code: Sec-independent protein translocase protein TatB (208 aa).

Residues Met1 to Gly21 traverse the membrane as a helical segment. The tract at residues Asp188–Pro208 is disordered.

This sequence belongs to the TatB family. The Tat system comprises two distinct complexes: a TatABC complex, containing multiple copies of TatA, TatB and TatC subunits, and a separate TatA complex, containing only TatA subunits. Substrates initially bind to the TatABC complex, which probably triggers association of the separate TatA complex to form the active translocon.

The protein resides in the cell inner membrane. In terms of biological role, part of the twin-arginine translocation (Tat) system that transports large folded proteins containing a characteristic twin-arginine motif in their signal peptide across membranes. Together with TatC, TatB is part of a receptor directly interacting with Tat signal peptides. TatB may form an oligomeric binding site that transiently accommodates folded Tat precursor proteins before their translocation. This is Sec-independent protein translocase protein TatB from Xanthomonas axonopodis pv. citri (strain 306).